Reading from the N-terminus, the 125-residue chain is Small ribosomal subunit protein uS12m (125 aa).

Disordered regions lie at residues Met-1–Gln-29 and Leu-105–Lys-125. The span at His-10–Ala-23 shows a compositional bias: basic and acidic residues.

This sequence belongs to the universal ribosomal protein uS12 family.

It localises to the mitochondrion. Its function is as follows. Protein S12 is involved in the translation initiation step. In Oryza sativa subsp. japonica (Rice), this protein is Small ribosomal subunit protein uS12m (RPS12).